We begin with the raw amino-acid sequence, 98 residues long: Protein S100-A13 (98 aa).

Residues 18–53 enclose the EF-hand domain; the sequence is TTFFTFARQEGRKDSLSVNEFKELVTQQLPHLLKDV. Residues Ser32, Glu37, Asp64, Asn66, Asp68, Glu70, and Glu75 each coordinate Ca(2+). Phosphoserine is present on Ser32.

It belongs to the S-100 family. As to quaternary structure, homodimer. Part of a copper-dependent multiprotein complex containing S100A13, FGF1 and SYT1. Interacts with FGF1 and SYT1. Interacts with IL1A. As to expression, expressed in heart and skeletal muscle.

The protein localises to the cytoplasm. Its subcellular location is the secreted. Plays a role in the export of proteins that lack a signal peptide and are secreted by an alternative pathway. Binds two calcium ions per subunit. Binds one copper ion. Binding of one copper ion does not interfere with calcium binding. Required for the copper-dependent stress-induced export of IL1A and FGF1. The calcium-free protein binds to lipid vesicles containing phosphatidylserine, but not to vesicles containing phosphatidylcholine. This chain is Protein S100-A13 (S100A13), found in Homo sapiens (Human).